Reading from the N-terminus, the 193-residue chain is uncharacterized protein (193 aa).

The N-terminal stretch at 1-26 (MRNVFVGALCMCGMSFVFSDSVRSAA) is a signal peptide.

This is an uncharacterized protein from Treponema pallidum (strain Nichols).